We begin with the raw amino-acid sequence, 396 residues long: Lipid-A-disaccharide synthase (396 aa).

The protein belongs to the LpxB family.

It carries out the reaction a lipid X + a UDP-2-N,3-O-bis[(3R)-3-hydroxyacyl]-alpha-D-glucosamine = a lipid A disaccharide + UDP + H(+). The protein operates within bacterial outer membrane biogenesis; LPS lipid A biosynthesis. Condensation of UDP-2,3-diacylglucosamine and 2,3-diacylglucosamine-1-phosphate to form lipid A disaccharide, a precursor of lipid A, a phosphorylated glycolipid that anchors the lipopolysaccharide to the outer membrane of the cell. In Rhodopseudomonas palustris (strain BisB18), this protein is Lipid-A-disaccharide synthase.